The following is a 602-amino-acid chain: Leucine-rich repeat-containing protein 40 (602 aa).

The disordered stretch occupies residues 1–26; sequence MSRHMRAPRFDPRAGFHAEGKDRGPS. The segment covering 8–24 has biased composition (basic and acidic residues); sequence PRFDPRAGFHAEGKDRG. Residues 35 to 58 form an LRR 1 repeat; it reads ARSSGQLNLAGRNLGEVPQCVWRI. Ser71 bears the Phosphoserine mark. LRR repeat units lie at residues 81–103, 104–126, 127–149, 150–172, 174–195, 196–219, 221–241, 242–266, 268–287, 288–310, 311–334, 336–356, 398–421, 424–447, 449–470, 471–494, 496–517, 519–540, 541–564, and 566–587; these read QTDLTKLIISSNKLQSLSDDLRL, LPALTVLDIHDNQLTSLPSAIRE, LDNLQKLNVSHNKLKILPEEITS, LKNLRTLHLQHNELTCIPEGFEH, SCLEDLDLSSNRLATVPADFAL, LSSLLRLNLSSNQLKNLPAEISRM, RLKHLDCDANLLETVPPDVGS, MESLELLYLRRNKLRVLPEFPSCRQ, KELHLAENQIEKLGAEHLQH, LQAILVLDLRGNKLRSVPEEMAL, LQSLERLDLSNNDISSLPCSLGNL, LKFLALEGNPLRTIRREIIAK, IATLKLLDYSDKQATLIPDDLFDA, TTLITSINFSKNQLCEIPQRIVEL, EMVLDINLSFNKLSFISHELCL, LQKLTFLDLRNNFLSSLPEEMSSL, KLQTINLSFNRFKVFPEVLYRI, TLEAVLISNNQVGSVDPQKMKL, MENLNTLDLQNNDLLQIPPELGNC, and QLRTLLLDGNPFRVPRAAILMK.

The sequence is that of Leucine-rich repeat-containing protein 40 (Lrrc40) from Mus musculus (Mouse).